A 144-amino-acid polypeptide reads, in one-letter code: Large ribosomal subunit protein uL11 (144 aa).

It belongs to the universal ribosomal protein uL11 family. As to quaternary structure, part of the ribosomal stalk of the 50S ribosomal subunit. Interacts with L10 and the large rRNA to form the base of the stalk. L10 forms an elongated spine to which L12 dimers bind in a sequential fashion forming a multimeric L10(L12)X complex. One or more lysine residues are methylated.

In terms of biological role, forms part of the ribosomal stalk which helps the ribosome interact with GTP-bound translation factors. In Corynebacterium efficiens (strain DSM 44549 / YS-314 / AJ 12310 / JCM 11189 / NBRC 100395), this protein is Large ribosomal subunit protein uL11.